A 432-amino-acid polypeptide reads, in one-letter code: Protein trichome birefringence-like 23 (432 aa).

The helical; Signal-anchor for type II membrane protein transmembrane segment at 13–35 threads the bilayer; it reads QNTYLIKLVAATLITCLAFRFFV. The GDS motif signature appears at 153–155; that stretch reads GDS. The DCXHWCLPGXXDXWN motif motif lies at 404-418; the sequence is DCLHWCLPGPIDHLN.

The protein belongs to the PC-esterase family. TBL subfamily.

The protein resides in the membrane. May act as a bridging protein that binds pectin and other cell wall polysaccharides. Probably involved in maintaining esterification of pectins. May be involved in the specific O-acetylation of cell wall polymers. The polypeptide is Protein trichome birefringence-like 23 (TBL23) (Arabidopsis thaliana (Mouse-ear cress)).